A 676-amino-acid polypeptide reads, in one-letter code: Envelope glycoprotein (676 aa).

A signal peptide spans 1–32 (MGGLSLLQLPRDKFRKSSFFVWVIILFQKAFS). The interval 33–185 (MPLGVVTNST…FAEGVIAFLI (153 aa)) is receptor binding. Residues 33-650 (MPLGVVTNST…DDNWWTGWRQ (618 aa)) lie on the Extracellular side of the membrane. An N-linked (GlcNAc...) asparagine; by host glycan is attached at N40. 5 disulfide bridges follow: C53-C609, C108-C135, C121-C147, C511-C556, and C601-C608. Residues N204, N208, N238, N257, N268, N296, N314, and N366 are each glycosylated (N-linked (GlcNAc...) asparagine; by host). Positions 305–485 (ELSFEALSLN…STSNGLITST (181 aa)) are mucin-like region. Disordered regions lie at residues 337–373 (RKYS…GRRV) and 404–461 (RPSS…LTTP). 2 stretches are compositionally biased toward low complexity: residues 405 to 428 (PSSS…TPTT) and 449 to 461 (PGPT…LTTP). Residue N463 is glycosylated (N-linked (GlcNAc...) asparagine; by host). A fusion peptide region spans residues 524–539 (HNAAGIAWIPYFGPGA). Residues 554–595 (LVCGLRQLANETTQALQLFLRATTELRTYTILNRKAIDFLLR) are a coiled coil. Residue N563 is glycosylated (N-linked (GlcNAc...) asparagine; by host). Positions 615–634 (WTKNITDKINQIIHDFIDNP) form a coiled coil. N-linked (GlcNAc...) asparagine; by host glycosylation occurs at N618. A helical transmembrane segment spans residues 651-671 (WIPAGIGITGIIIAIIALLCV). Residues C670 and C672 are each lipidated (S-palmitoyl cysteine; by host). The Cytoplasmic portion of the chain corresponds to 672-676 (CKLLC).

Belongs to the filoviruses glycoprotein family. As to quaternary structure, homotrimer; each monomer consists of a GP1 and a GP2 subunit linked by disulfide bonds. The resulting peplomers (GP1,2) protrude from the virus surface as spikes. Interacts with host integrin alpha-V/ITGAV. Interacts with host CLEC10A. Binds also to host CD209 and CLEC4M/DC-SIGN(R). Interacts with host FOLR1. Interacts with BST2; this interaction inhibits the antiviral effect of BST2 and this allows viral release from infected cells. Interacts with host FCN1; this interaction enhances viral entry. Interacts with host TLR4; this interaction induces cell death in T-lymphocytes or proinflammatory cytokines and SOCS1 production in monocytes. In terms of assembly, interacts with host entry receptor NPC1. GP1 and GP2delta are part of GP1,2delta soluble complexes released by ectodomain shedding. Post-translationally, N-glycosylated. In terms of processing, O-glycosylated in the mucin-like region. Palmitoylation of GP2 is not required for its function. Post-translationally, specific enzymatic cleavages in vivo yield mature proteins. The precursor is processed into GP1 and GP2 by host cell furin in the trans Golgi, and maybe by other host proteases, to yield the mature GP1 and GP2 proteins. The cleavage site corresponds to the furin optimal cleavage sequence [KR]-X-[KR]-R. This cleavage does not seem to be required for function. After the internalization of the virus into cell endosomes, GP1 C-terminus is removed by the endosomal proteases cathepsin B, cathepsin L, or both, leaving a 19-kDa N-terminal fragment which is further digested by cathepsin B. Proteolytic processing of GP1,2 by host ADAM17 can remove the transmembrane anchor of GP2 and leads to shedding of complexes consisting in GP1 and truncated GP2 (GP1,2delta).

The protein localises to the virion membrane. The protein resides in the host cell membrane. It localises to the secreted. Functionally, trimeric GP1,2 complexes form the virion surface spikes and mediate the viral entry processes, with GP1 acting as the receptor-binding subunit and GP2 as the membrane fusion subunit. At later times of infection, down-regulates the expression of various host cell surface molecules that are essential for immune surveillance and cell adhesion. Down-modulates several integrins including ITGA1, ITGA2, ITGA3, ITGA4, ITGA5, ITGA6, ITGAV and ITGB1. This decrease in cell adhesion molecules may lead to cell detachment, contributing to the disruption of blood vessel integrity and hemorrhages developed during infection (cytotoxicity). Interacts with host TLR4 and thereby stimulates the differentiation and activation of monocytes leading to bystander death of T-lymphocytes. Down-regulates as well the function of host natural killer cells. Counteracts the antiviral effect of host BST2/tetherin that restricts release of progeny virions from infected cells. However, cooperates with VP40 and host BST2 to activate canonical NF-kappa-B pathway in a manner dependent on neddylation. Its function is as follows. Functions as a decoy for anti-GP1,2 antibodies thereby contributing to viral immune evasion. Interacts and activates host macrophages and dendritic cells inducing up-regulation of cytokine transcription. This effect is mediated throught activation of host TLR4. In terms of biological role, responsible for binding to the receptor(s) on target cells. Interacts with CD209/DC-SIGN and CLEC4M/DC-SIGNR which act as cofactors for virus entry into dendritic cells (DCs) and endothelial cells. Binding to the macrophage specific lectin CLEC10A also seems to enhance virus infectivity. Interaction with FOLR1/folate receptor alpha may be a cofactor for virus entry in some cell types, although results are contradictory. Members of the Tyro3 receptor tyrosine kinase family also seem to be cell entry factors in filovirus infection. Once attached, the virions are internalized through clathrin-dependent endocytosis and/or macropinocytosis. After internalization of the virus into the endosomes of the host cell, proteolysis of GP1 by two cysteine proteases, CTSB/cathepsin B and CTSL/cathepsin L removes the glycan cap and allows GP1 binding to the host entry receptor NPC1. NPC1-binding, Ca(2+) and acidic pH induce a conformational change of GP2, which unmasks its fusion peptide and permit membranes fusion. Acts as a class I viral fusion protein. Under the current model, the protein has at least 3 conformational states: pre-fusion native state, pre-hairpin intermediate state, and post-fusion hairpin state. During viral and target cell membrane fusion, the coiled coil regions (heptad repeats) assume a trimer-of-hairpins structure, positioning the fusion peptide in close proximity to the C-terminal region of the ectodomain. The formation of this structure appears to drive apposition and subsequent fusion of viral and target cell membranes. Responsible for penetration of the virus into the cell cytoplasm by mediating the fusion of the membrane of the endocytosed virus particle with the endosomal membrane. Low pH in endosomes induces an irreversible conformational change in GP2, releasing the fusion hydrophobic peptide. The polypeptide is Envelope glycoprotein (GP) (Sudan ebolavirus (strain Human/Uganda/Gulu/2000) (SEBOV)).